The following is an 871-amino-acid chain: DNA mismatch repair protein MutS (871 aa).

ATP is bound at residue 625-632; sequence GPNMAGKS.

Belongs to the DNA mismatch repair MutS family.

This protein is involved in the repair of mismatches in DNA. It is possible that it carries out the mismatch recognition step. This protein has a weak ATPase activity. The polypeptide is DNA mismatch repair protein MutS (Chlorobium limicola (strain DSM 245 / NBRC 103803 / 6330)).